Reading from the N-terminus, the 588-residue chain is Aspartate--tRNA(Asp/Asn) ligase (588 aa).

Glu-172 provides a ligand contact to L-aspartate. Positions 196–199 (QLFK) are aspartate. Arg-218 contacts L-aspartate. Residues 218–220 (RDE) and Gln-227 each bind ATP. Residue His-450 coordinates L-aspartate. Residue Glu-484 participates in ATP binding. Arg-491 is a binding site for L-aspartate. Residue 536–539 (GLDR) coordinates ATP.

It belongs to the class-II aminoacyl-tRNA synthetase family. Type 1 subfamily. Homodimer.

Its subcellular location is the cytoplasm. It carries out the reaction tRNA(Asx) + L-aspartate + ATP = L-aspartyl-tRNA(Asx) + AMP + diphosphate. In terms of biological role, aspartyl-tRNA synthetase with relaxed tRNA specificity since it is able to aspartylate not only its cognate tRNA(Asp) but also tRNA(Asn). Reaction proceeds in two steps: L-aspartate is first activated by ATP to form Asp-AMP and then transferred to the acceptor end of tRNA(Asp/Asn). In Nitrosospira multiformis (strain ATCC 25196 / NCIMB 11849 / C 71), this protein is Aspartate--tRNA(Asp/Asn) ligase.